A 185-amino-acid polypeptide reads, in one-letter code: Large ribosomal subunit protein uL30 (185 aa).

This sequence belongs to the universal ribosomal protein uL30 family. In terms of assembly, part of the 50S ribosomal subunit.

The protein is Large ribosomal subunit protein uL30 of Caldivirga maquilingensis (strain ATCC 700844 / DSM 13496 / JCM 10307 / IC-167).